The sequence spans 484 residues: ATP synthase subunit beta (484 aa).

Residue 168–175 coordinates ATP; the sequence is GGAGVGKT.

Belongs to the ATPase alpha/beta chains family. As to quaternary structure, F-type ATPases have 2 components, CF(1) - the catalytic core - and CF(0) - the membrane proton channel. CF(1) has five subunits: alpha(3), beta(3), gamma(1), delta(1), epsilon(1). CF(0) has three main subunits: a(1), b(2) and c(9-12). The alpha and beta chains form an alternating ring which encloses part of the gamma chain. CF(1) is attached to CF(0) by a central stalk formed by the gamma and epsilon chains, while a peripheral stalk is formed by the delta and b chains.

The protein localises to the cell membrane. The enzyme catalyses ATP + H2O + 4 H(+)(in) = ADP + phosphate + 5 H(+)(out). Functionally, produces ATP from ADP in the presence of a proton gradient across the membrane. The catalytic sites are hosted primarily by the beta subunits. This chain is ATP synthase subunit beta, found in Pseudarthrobacter chlorophenolicus (strain ATCC 700700 / DSM 12829 / CIP 107037 / JCM 12360 / KCTC 9906 / NCIMB 13794 / A6) (Arthrobacter chlorophenolicus).